The following is a 218-amino-acid chain: Probable nicotinate-nucleotide adenylyltransferase (218 aa).

It belongs to the NadD family.

The enzyme catalyses nicotinate beta-D-ribonucleotide + ATP + H(+) = deamido-NAD(+) + diphosphate. The protein operates within cofactor biosynthesis; NAD(+) biosynthesis; deamido-NAD(+) from nicotinate D-ribonucleotide: step 1/1. Catalyzes the reversible adenylation of nicotinate mononucleotide (NaMN) to nicotinic acid adenine dinucleotide (NaAD). The chain is Probable nicotinate-nucleotide adenylyltransferase from Syntrophotalea carbinolica (strain DSM 2380 / NBRC 103641 / GraBd1) (Pelobacter carbinolicus).